The sequence spans 542 residues: T-complex protein 1 subunit delta (542 aa).

Positions 1 to 16 are enriched in low complexity; that stretch reads MPENVAPRTGPPAGAA. The disordered stretch occupies residues 1 to 31; it reads MPENVAPRTGPPAGAAGAAGGRGKSAYQDRD. Arg22 is modified (omega-N-methylarginine). Lys24 is modified (N6-acetyllysine). Ser39 is subject to Phosphoserine. Residue Gly56 participates in ADP binding. Gly56 contributes to the ATP binding site. Mg(2+) is bound at residue Asp107. ADP contacts are provided by Gly108, Thr109, Thr110, Ser111, Asn175, Ser176, and Lys177. ATP-binding residues include Gly108 and Thr109. Position 177 (Lys177) interacts with ATP. A phosphoserine mark is found at Ser187 and Ser205. Residues Lys291, Lys305, Lys322, and Lys329 each carry the N6-acetyllysine modification. Residue Gly428 participates in ADP binding. Ser447 bears the Phosphoserine mark. Gln513 is an ADP binding site.

Belongs to the TCP-1 chaperonin family. Component of the chaperonin-containing T-complex (TRiC), a hexadecamer composed of two identical back-to-back stacked rings enclosing a protein folding chamber. Each ring is made up of eight different subunits: TCP1/CCT1, CCT2, CCT3, CCT4, CCT5, CCT6A/CCT6, CCT7, CCT8. Interacts with PACRG. Interacts with DNAAF4. Interacts with DLEC1.

The protein resides in the cytoplasm. Its subcellular location is the melanosome. It localises to the cytoskeleton. It is found in the microtubule organizing center. The protein localises to the centrosome. The protein resides in the cilium basal body. It carries out the reaction ATP + H2O = ADP + phosphate + H(+). In terms of biological role, component of the chaperonin-containing T-complex (TRiC), a molecular chaperone complex that assists the folding of actin, tubulin and other proteins upon ATP hydrolysis. The TRiC complex mediates the folding of WRAP53/TCAB1, thereby regulating telomere maintenance. As part of the TRiC complex may play a role in the assembly of BBSome, a complex involved in ciliogenesis regulating transports vesicles to the cilia. The chain is T-complex protein 1 subunit delta (CCT4) from Bos taurus (Bovine).